The following is a 553-amino-acid chain: Mucolipin-3 (553 aa).

Residues 1–62 lie on the Cytoplasmic side of the membrane; that stretch reads MADPEVVVSS…FWARGRKPWK (62 aa). The segment at 52-62 is interaction with phosphoinositides; the sequence is KFWARGRKPWK. The helical transmembrane segment at 63-83 threads the bilayer; the sequence is LAIQILKIAMVTIQLVLFGLS. Topologically, residues 84-283 are extracellular; sequence NQMVVAFKEE…VSGSIQKNTH (200 aa). The tract at residues 104 to 118 is extracellular/lumenal pore loop; sequence KGYMDRMDDTYAVYT. 3 N-linked (GlcNAc...) asparagine glycosylation sites follow: Asn138, Asn172, and Asn205. Cys159 and Cys185 form a disulfide bridge. Cys238 and Cys269 are oxidised to a cystine. A helical transmembrane segment spans residues 284-304; it reads YMMIFDAFVILTCLVSLILCI. Residues 305–341 are Cytoplasmic-facing; sequence RSVIRGLQLQQEFVNFFLLHYKKEVSVSDQMEFVNGW. Residues 342-362 traverse the membrane as a helical segment; that stretch reads YIMIIISDILTIIGSILKMEI. At 363-371 the chain is on the extracellular side; it reads QAKSLTSYD. Residues 372–392 traverse the membrane as a helical segment; sequence VCSILLGTSTMLVWLGVIRYL. Over 393-414 the chain is Cytoplasmic; that stretch reads GFFAKYNLLILTLQAALPNVIR. A helical membrane pass occupies residues 415–435; that stretch reads FCCCAAMIYLGYCFCGWIVLG. The Extracellular portion of the chain corresponds to 436–443; it reads PYHDKFRS. Residues 444 to 464 constitute an intramembrane region (pore-forming); the sequence is LNMVSECLFSLINGDDMFATF. The short motif at 456 to 459 is the Selectivity filter element; it reads NGDD. Over 465 to 475 the chain is Extracellular; it reads AKMQQKSYLVW. The chain crosses the membrane as a helical span at residues 476 to 497; it reads LFSRIYLYSFISLFIYMILSLF. Residues 498–553 lie on the Cytoplasmic side of the membrane; that stretch reads IALITDTYETIKQYQQDGFPETELRTFISECKDLPNSGKYRLEDDPPVSLFCCCKK.

This sequence belongs to the transient receptor (TC 1.A.4) family. Polycystin subfamily. MCOLN3 sub-subfamily. In terms of assembly, homotetramer. Can heterooligomerize with MCOLN1; heteromeric assemblies have different channel properties as compared to the respective homooligomers and may be tissue-specific. May heterooligomerize with TRPV5 to form a functional distinct ion channel. Interacts with GABARAPL2. In terms of processing, N-glycosylated.

It localises to the cell membrane. Its subcellular location is the early endosome membrane. The protein resides in the late endosome membrane. The protein localises to the lysosome membrane. It is found in the cytoplasmic vesicle. It localises to the autophagosome membrane. The enzyme catalyses Ca(2+)(in) = Ca(2+)(out). It catalyses the reaction K(+)(in) = K(+)(out). The catalysed reaction is Na(+)(in) = Na(+)(out). Its activity is regulated as follows. Channel activity is activated by PtdIns(3,5)P2 (phosphatidylinositol 3,5-bisphosphate). Inhibited by lumenal H(+) and Na(+). The channel pore shows dynamic behavior and undergoes spontaneous, Ca(2+)-dependent modulation when conducting Ca(2+). In terms of biological role, nonselective cation channel probably playing a role in the regulation of membrane trafficking events. Acts as a Ca(2+)-permeable cation channel with inwardly rectifying activity. Mediates release of Ca(2+) from endosomes to the cytoplasm, contributes to endosomal acidification and is involved in the regulation of membrane trafficking and fusion in the endosomal pathway. Also permeable to Mg(2+), Na(+) and K(+). Does not seem to act as mechanosensory transduction channel in inner ear sensory hair cells. Proposed to play a critical role at the cochlear stereocilia ankle-link region during hair-bundle growth. Involved in the regulation of autophagy. Through association with GABARAPL2 may be involved in autophagosome formation possibly providing Ca(2+) for the fusion process. Through a possible and probably tissue-specific heteromerization with MCOLN1 may be at least in part involved in many lysosome-dependent cellular events. Possible heteromeric ion channel assemblies with TRPV5 show pharmacological similarity with TRPML3. This is Mucolipin-3 (MCOLN3) from Homo sapiens (Human).